The following is a 505-amino-acid chain: ATP synthase subunit alpha (505 aa).

Position 171–178 (171–178) interacts with ATP; that stretch reads GDRQTGKT.

Belongs to the ATPase alpha/beta chains family. As to quaternary structure, F-type ATPases have 2 components, CF(1) - the catalytic core - and CF(0) - the membrane proton channel. CF(1) has five subunits: alpha(3), beta(3), gamma(1), delta(1), epsilon(1). CF(0) has three main subunits: a(1), b(2) and c(9-12). The alpha and beta chains form an alternating ring which encloses part of the gamma chain. CF(1) is attached to CF(0) by a central stalk formed by the gamma and epsilon chains, while a peripheral stalk is formed by the delta and b chains.

It localises to the cell inner membrane. The enzyme catalyses ATP + H2O + 4 H(+)(in) = ADP + phosphate + 5 H(+)(out). In terms of biological role, produces ATP from ADP in the presence of a proton gradient across the membrane. The alpha chain is a regulatory subunit. The chain is ATP synthase subunit alpha from Campylobacter hominis (strain ATCC BAA-381 / DSM 21671 / CCUG 45161 / LMG 19568 / NCTC 13146 / CH001A).